The sequence spans 484 residues: Protein nucleotidyltransferase YdiU (484 aa).

The ATP site is built by G92, G94, R95, K115, D127, G128, R178, and R185. D258 functions as the Proton acceptor in the catalytic mechanism. The Mg(2+) site is built by N259 and D268. D268 lines the ATP pocket.

This sequence belongs to the SELO family. It depends on Mg(2+) as a cofactor. Requires Mn(2+) as cofactor.

It catalyses the reaction L-seryl-[protein] + ATP = 3-O-(5'-adenylyl)-L-seryl-[protein] + diphosphate. The catalysed reaction is L-threonyl-[protein] + ATP = 3-O-(5'-adenylyl)-L-threonyl-[protein] + diphosphate. The enzyme catalyses L-tyrosyl-[protein] + ATP = O-(5'-adenylyl)-L-tyrosyl-[protein] + diphosphate. It carries out the reaction L-histidyl-[protein] + UTP = N(tele)-(5'-uridylyl)-L-histidyl-[protein] + diphosphate. It catalyses the reaction L-seryl-[protein] + UTP = O-(5'-uridylyl)-L-seryl-[protein] + diphosphate. The catalysed reaction is L-tyrosyl-[protein] + UTP = O-(5'-uridylyl)-L-tyrosyl-[protein] + diphosphate. Nucleotidyltransferase involved in the post-translational modification of proteins. It can catalyze the addition of adenosine monophosphate (AMP) or uridine monophosphate (UMP) to a protein, resulting in modifications known as AMPylation and UMPylation. The polypeptide is Protein nucleotidyltransferase YdiU (Mycolicibacterium smegmatis (strain ATCC 700084 / mc(2)155) (Mycobacterium smegmatis)).